The following is a 700-amino-acid chain: Methionine--tRNA ligase (700 aa).

Positions P12–H22 match the 'HIGH' region motif. Residues C143, C146, C156, and C159 each contribute to the Zn(2+) site. The 'KMSKS' region signature appears at K348 to S352. Residue K351 participates in ATP binding. The 107-residue stretch at D594–H700 folds into the tRNA-binding domain.

It belongs to the class-I aminoacyl-tRNA synthetase family. MetG type 1 subfamily. Homodimer. It depends on Zn(2+) as a cofactor.

It is found in the cytoplasm. It catalyses the reaction tRNA(Met) + L-methionine + ATP = L-methionyl-tRNA(Met) + AMP + diphosphate. Is required not only for elongation of protein synthesis but also for the initiation of all mRNA translation through initiator tRNA(fMet) aminoacylation. In Albidiferax ferrireducens (strain ATCC BAA-621 / DSM 15236 / T118) (Rhodoferax ferrireducens), this protein is Methionine--tRNA ligase.